The chain runs to 156 residues: Transcription elongation factor GreA (156 aa).

Residues 46 to 67 are a coiled coil; it reads AEYHAAREKQSFIEGRIKELEA.

This sequence belongs to the GreA/GreB family.

In terms of biological role, necessary for efficient RNA polymerase transcription elongation past template-encoded arresting sites. The arresting sites in DNA have the property of trapping a certain fraction of elongating RNA polymerases that pass through, resulting in locked ternary complexes. Cleavage of the nascent transcript by cleavage factors such as GreA or GreB allows the resumption of elongation from the new 3'terminus. GreA releases sequences of 2 to 3 nucleotides. This chain is Transcription elongation factor GreA, found in Cereibacter sphaeroides (strain ATCC 17029 / ATH 2.4.9) (Rhodobacter sphaeroides).